Consider the following 346-residue polypeptide: Putative serine/threonine-protein kinase K06H7.1 (346 aa).

Positions 20–287 (YKVVQKLGEG…KLFKLLEDVM (268 aa)) constitute a Protein kinase domain. ATP is bound by residues 26 to 34 (LGEGGCGSV) and Lys-50. Asp-141 (proton acceptor) is an active-site residue. Positions 302–326 (PEKKKNPASQGNKFGLGKKGTKESG) are disordered.

It belongs to the protein kinase superfamily. Ser/Thr protein kinase family.

It catalyses the reaction L-seryl-[protein] + ATP = O-phospho-L-seryl-[protein] + ADP + H(+). The enzyme catalyses L-threonyl-[protein] + ATP = O-phospho-L-threonyl-[protein] + ADP + H(+). The chain is Putative serine/threonine-protein kinase K06H7.1 from Caenorhabditis elegans.